The primary structure comprises 341 residues: Heme A synthase (341 aa).

A run of 8 helical transmembrane segments spans residues 7–27 (VTVW…IGGI), 92–112 (LFGR…AITK), 118–138 (MVAK…MGWF), 159–179 (LFLT…CAGV), 190–210 (FFTA…GALV), 253–273 (FLHR…PFWL), 280–300 (LFLA…VSVV), and 302–322 (IFLA…GVHM). Residue histidine 255 participates in heme binding. Residue histidine 308 coordinates heme.

This sequence belongs to the COX15/CtaA family. Type 2 subfamily. Interacts with CtaB. Requires heme b as cofactor.

It localises to the cell membrane. The catalysed reaction is Fe(II)-heme o + 2 A + H2O = Fe(II)-heme a + 2 AH2. Its pathway is porphyrin-containing compound metabolism; heme A biosynthesis; heme A from heme O: step 1/1. In terms of biological role, catalyzes the conversion of heme O to heme A by two successive hydroxylations of the methyl group at C8. The first hydroxylation forms heme I, the second hydroxylation results in an unstable dihydroxymethyl group, which spontaneously dehydrates, resulting in the formyl group of heme A. The protein is Heme A synthase of Anaplasma marginale (strain St. Maries).